The sequence spans 562 residues: Sesquiterpene synthase (562 aa).

3 residues coordinate Mg(2+): aspartate 315, aspartate 319, and glutamate 467. A DDXXD motif motif is present at residues 315–319; the sequence is DDIYD.

It belongs to the terpene synthase family. Tpsa subfamily. It depends on Mg(2+) as a cofactor. Mn(2+) is required as a cofactor.

Functionally, catalyzes the formation of beta-elemol, guaiol and bulnesol. The chain is Sesquiterpene synthase from Santalum spicatum (Australian sandalwood).